Consider the following 670-residue polypeptide: E3 ubiquitin-protein ligase TRAF7 (670 aa).

Disordered regions lie at residues 1–37 (MSSG…FGPA) and 49–97 (GTST…SLHS). Polar residues-rich tracts occupy residues 15 to 31 (GPSN…TRME) and 49 to 67 (GTST…STLA). Residues serine 61, serine 88, and serine 91 each carry the phosphoserine modification. The RING-type zinc finger occupies 131–165 (CQLCCSVFKDPVITTCGHTFCRRCALKSEKCPVDN). The segment at 222–276 (HEGSCDYRPVRCPNNPSCPPLLRMNLEAHLKECEHIKCPHSKYGCTFIGNQDTYE) adopts a TRAF-type zinc-finger fold. WD repeat units lie at residues 394–433 (GHQG…KCQK), 437–474 (GHDG…KVNT), 477–513 (AHDN…LKLK), 515–554 (ELTG…CIHV), 557–594 (TSGG…QVRT), 597–638 (GHVG…CTQT), and 641–669 (RHQG…KVWT).

The protein belongs to the WD repeat TRAF7 family. Homodimer. Interacts with MAP3K3 and promotes the kinase activity of this enzyme. Phosphorylated by MAP3K3. In terms of processing, ubiquitinates itself upon phosphorylation. In terms of tissue distribution, ubiquitously expressed with high levels in skeletal muscle, heart, colon, spleen, kidney, liver and placenta.

Its subcellular location is the cytoplasmic vesicle. The protein localises to the cytoplasm. The protein resides in the nucleus. The catalysed reaction is S-ubiquitinyl-[E2 ubiquitin-conjugating enzyme]-L-cysteine + [acceptor protein]-L-lysine = [E2 ubiquitin-conjugating enzyme]-L-cysteine + N(6)-ubiquitinyl-[acceptor protein]-L-lysine.. It functions in the pathway protein modification; protein ubiquitination. Its function is as follows. E3 ubiquitin and SUMO-protein ligase that plays a role in different biological processes such as innate immunity, inflammation or apoptosis. Potentiates MAP3K3-mediated activation of JUN/AP1 and DDIT3 transcriptional regulators. Negatively regulates MYB transcriptional activity by sequestering it to the cytosol via SUMOylation. Plays a role in the phosphorylation of MAPK1 and/or MAPK3, probably via its interaction with MAP3K3. Negatively regulates RLR-mediated innate immunity by promoting 'Lys-48'-linked ubiquitination of TBK1 through its RING domain to inhibit the cellular antiviral response. Promotes 'Lys-29'-linked polyubiquitination of NEMO/IKBKG and RELA leading to targeting these two proteins to lysosomal degradative pathways, reducing the transcriptional activity of NF-kappa-B. The polypeptide is E3 ubiquitin-protein ligase TRAF7 (TRAF7) (Homo sapiens (Human)).